Reading from the N-terminus, the 208-residue chain is MTLIPIVIEQTSRGERAYDIYSRLVKERIIFVTGPVEDNMASVIVAQLLFLESENPDKDIYMYINSPGGVVTAGLSIYDTMQYIKPDVSTLCIGQAASMGSLLLAAGTEGKRYSLPHSRIMIHQPSGGYQGQATDIEIHANEILRVKRKLNQIYEKHTGNSLKKIEGMMERDKFMDPEEARRIGLIDRVIAERKDIKVENIKVEQKVG.

Ser98 acts as the Nucleophile in catalysis. The active site involves His123.

It belongs to the peptidase S14 family. As to quaternary structure, fourteen ClpP subunits assemble into 2 heptameric rings which stack back to back to give a disk-like structure with a central cavity, resembling the structure of eukaryotic proteasomes.

It is found in the cytoplasm. The enzyme catalyses Hydrolysis of proteins to small peptides in the presence of ATP and magnesium. alpha-casein is the usual test substrate. In the absence of ATP, only oligopeptides shorter than five residues are hydrolyzed (such as succinyl-Leu-Tyr-|-NHMec, and Leu-Tyr-Leu-|-Tyr-Trp, in which cleavage of the -Tyr-|-Leu- and -Tyr-|-Trp bonds also occurs).. Cleaves peptides in various proteins in a process that requires ATP hydrolysis. Has a chymotrypsin-like activity. Plays a major role in the degradation of misfolded proteins. This is ATP-dependent Clp protease proteolytic subunit from Wolbachia sp. subsp. Brugia malayi (strain TRS).